A 140-amino-acid polypeptide reads, in one-letter code: ATP synthase epsilon chain (140 aa).

The protein belongs to the ATPase epsilon chain family. In terms of assembly, F-type ATPases have 2 components, CF(1) - the catalytic core - and CF(0) - the membrane proton channel. CF(1) has five subunits: alpha(3), beta(3), gamma(1), delta(1), epsilon(1). CF(0) has three main subunits: a, b and c.

The protein localises to the cell inner membrane. Functionally, produces ATP from ADP in the presence of a proton gradient across the membrane. In Thermodesulfovibrio yellowstonii (strain ATCC 51303 / DSM 11347 / YP87), this protein is ATP synthase epsilon chain.